Here is a 156-residue protein sequence, read N- to C-terminus: CD-NTase/cGAS isopeptidase (156 aa).

Residues 9–147 (IDDFDNHVVI…WIGKKIKNDI (139 aa)) form the MPN domain. Glu-38 (proton donor/acceptor) is an active-site residue. Residues His-100, His-102, and Asp-113 each contribute to the Zn(2+) site. A JAMM motif motif is present at residues 100-113 (HTHPEDFPHPSFID).

Belongs to the peptidase M67B family. Cap3 isopeptidase subfamily.

Functionally, metalloprotease priming reversal component of a CBASS antivirus system. CBASS (cyclic oligonucleotide-based antiphage signaling system) provides immunity against bacteriophages. The CD-NTase protein (DncV) synthesizes cyclic nucleotides in response to infection; these serve as specific second messenger signals. The signals activate a diverse range of effectors, leading to bacterial cell death and thus abortive phage infection. A type II-A(GA) CBASS system. Its function is as follows. Reverses the primed state of DncV, the CD-NTase, cleaving it from cellular proteins. Cleaves a Sumo-DncV-DncV fusion protein precisely between the 2 DncV moieties. In terms of biological role, protects E.coli against phage infection. When capV and dncV are introduced in E.coli MG1655 there is 1000-fold protection against phage P1; protection against other phage (T4, T5 and T6) requires the 2 subsequent genes. In another paper the capV-dncV-cap2-cap3 operon gives 10(4)-10(5)-fold protection against phages lambda, T2, T4 and T6, about 1000-fold protection against P1 and 10-fold protection against T5. This is CD-NTase/cGAS isopeptidase from Escherichia coli (strain TW11681).